Here is a 968-residue protein sequence, read N- to C-terminus: Isoleucine--tRNA ligase (968 aa).

Residues 68–78 carry the 'HIGH' region motif; it reads PYANGALHMGH. Glutamate 582 lines the L-isoleucyl-5'-AMP pocket. A 'KMSKS' region motif is present at residues 623 to 627; it reads KMSKS. ATP is bound at residue lysine 626. Zn(2+) contacts are provided by cysteine 936, cysteine 939, cysteine 956, and cysteine 959.

The protein belongs to the class-I aminoacyl-tRNA synthetase family. IleS type 1 subfamily. As to quaternary structure, monomer. The cofactor is Zn(2+).

The protein resides in the cytoplasm. It carries out the reaction tRNA(Ile) + L-isoleucine + ATP = L-isoleucyl-tRNA(Ile) + AMP + diphosphate. In terms of biological role, catalyzes the attachment of isoleucine to tRNA(Ile). As IleRS can inadvertently accommodate and process structurally similar amino acids such as valine, to avoid such errors it has two additional distinct tRNA(Ile)-dependent editing activities. One activity is designated as 'pretransfer' editing and involves the hydrolysis of activated Val-AMP. The other activity is designated 'posttransfer' editing and involves deacylation of mischarged Val-tRNA(Ile). The protein is Isoleucine--tRNA ligase of Prochlorococcus marinus (strain MIT 9301).